Reading from the N-terminus, the 67-residue chain is Large ribosomal subunit protein bL32 (67 aa).

Positions M1 to Q19 are enriched in basic residues. Residues M1–K21 form a disordered region.

This sequence belongs to the bacterial ribosomal protein bL32 family.

This is Large ribosomal subunit protein bL32 from Clavibacter michiganensis subsp. michiganensis (strain NCPPB 382).